Here is a 252-residue protein sequence, read N- to C-terminus: Ubiquinone biosynthesis O-methyltransferase (252 aa).

S-adenosyl-L-methionine-binding residues include R45, G76, D97, and M141.

Belongs to the methyltransferase superfamily. UbiG/COQ3 family.

The catalysed reaction is a 3-demethylubiquinol + S-adenosyl-L-methionine = a ubiquinol + S-adenosyl-L-homocysteine + H(+). It carries out the reaction a 3-(all-trans-polyprenyl)benzene-1,2-diol + S-adenosyl-L-methionine = a 2-methoxy-6-(all-trans-polyprenyl)phenol + S-adenosyl-L-homocysteine + H(+). The protein operates within cofactor biosynthesis; ubiquinone biosynthesis. Its function is as follows. O-methyltransferase that catalyzes the 2 O-methylation steps in the ubiquinone biosynthetic pathway. The chain is Ubiquinone biosynthesis O-methyltransferase from Caulobacter sp. (strain K31).